The chain runs to 1544 residues: Transcriptional activator GLI3 (1544 aa).

Composition is skewed to polar residues over residues 1 to 10 and 402 to 429; these read MEAQSHSSTT and NPVQVSSGPSESTQHNKPTSESAVSSTG. 2 disordered regions span residues 1-83 and 373-477; these read MEAQ…EERA and SAFG…QEPE. The span at 463–476 shows a compositional bias: basic and acidic residues; the sequence is VKEEGDKDESKQEP. The C2H2-type 1 zinc-finger motif lies at 482-509; it reads TNCHWEGCSREFDTQEQLVHHINNDHIH. Residues 520–542 form a C2H2-type 2; degenerate zinc finger; that stretch reads LDCSREQKPFKAQYMLVVHMRRH. 3 consecutive C2H2-type zinc fingers follow at residues 548 to 572, 578 to 603, and 609 to 634; these read HKCTFEGCTKAYSRLENLKTHLRSH, YVCEHEGCNKAFSNASDRAKHQNRTH, and YVCKIPGCTKRYTDPSSLRKHVKTVH. Disordered regions lie at residues 622 to 728, 865 to 919, 1126 to 1155, and 1327 to 1368; these read DPSS…YSNN, RSSG…DLPS, SVVLGNNNPSSFDRAPPASSQPAGSEVSKS, and HYQG…GNQS. Basic and acidic residues predominate over residues 634–650; sequence HGPEAHVTKKQRGDIHP. The span at 660–685 shows a compositional bias: polar residues; sequence SHSQTRSPGQQTQGATGEQKDLNSTT. Residues 686-701 are compositionally biased toward basic and acidic residues; it reads SRREECLQVKAVKSEK. Over residues 702–728 the composition is skewed to polar residues; sequence PMTSQPSPGGQSTCSSEQSPISNYSNN. Residues 865–882 are compositionally biased toward low complexity; that stretch reads RSSGISPCFSSRRSSDAS. Residues 1330-1355 are compositionally biased toward polar residues; that stretch reads GVNQSSPMTLGQVSPTSQSSLHQGPQ.

The protein belongs to the GLI C2H2-type zinc-finger protein family. Post-translationally, phosphorylation is essential for its proteolytic processing. The repressor form (GLI3R), a C-terminally truncated form is generated from the full-length GLI3 protein (GLI3FL) through proteolytic processing.

It localises to the nucleus. The protein localises to the cytoplasm. Has a dual function as a transcriptional activator and a repressor of the sonic hedgehog (Shh) pathway, and plays a role in limb development. The full-length GLI3 form (GLI3FL) acts as an activator (GLI3A) while GLI3R, its C-terminally truncated form, acts as a repressor. The protein is Transcriptional activator GLI3 (GLI3) of Gallus gallus (Chicken).